The chain runs to 1053 residues: LRR receptor-like serine/threonine-protein kinase GHR1 (1053 aa).

A signal peptide spans 1–18 (MNLSRILLLSMFFLSAMG). The Extracellular segment spans residues 19–630 (QLPSQDIMAL…NKSTNKLVKV (612 aa)). 13 LRR repeats span residues 73–93 (GVVL…FSNL), 94–119 (TKLV…SFKS), 121–141 (QFLD…IGRS), 142–165 (VSLR…MGGL), 166–189 (ISLQ…LTRL), 191–212 (DLLY…GFEL), 213–237 (ISSL…FFLL), 239–260 (NASY…LLPG), 262–285 (SESI…GFQL), 286–309 (FQNL…FNYV), 310–333 (YDLE…LLKG), 335–357 (SLLL…SIMS), and 358–384 (TTLH…CVLL). The N-linked (GlcNAc...) asparagine glycan is linked to N92. Phosphoserine; by HT1 occurs at positions 100 and 102. The N-linked (GlcNAc...) asparagine glycan is linked to N103. Residues S105 and S126 each carry the phosphoserine; by HT1 modification. N-linked (GlcNAc...) asparagine glycosylation is found at N146 and N153. N-linked (GlcNAc...) asparagine glycosylation occurs at N196. N239 is a glycosylation site (N-linked (GlcNAc...) asparagine). S262 is modified (phosphoserine; by HT1). N-linked (GlcNAc...) asparagine glycosylation occurs at N269. The residue at position 278 (S278) is a Phosphoserine; by HT1. T280 is modified (phosphothreonine; by HT1). S281 carries the phosphoserine; by HT1 modification. S325 is modified (phosphoserine; by HT1). N-linked (GlcNAc...) asparagine glycosylation occurs at N347. N394 carries N-linked (GlcNAc...) asparagine glycosylation. LRR repeat units lie at residues 401 to 425 (WENI…TPQL), 426 to 449 (LRAN…IPTH), 450 to 474 (YPKL…LLSM), 476 to 498 (TLEE…PSSG), 499 to 521 (SRIR…VFGS), 522 to 546 (LTNL…MNDI), 548 to 570 (SLSS…LSSN), and 572 to 592 (MAFN…LKNF). Phosphotyrosine; by HT1 is present on Y406. S410 is subject to Phosphoserine; by HT1. T415 carries the phosphothreonine; by HT1 modification. A Phosphoserine; by HT1 modification is found at S417. N-linked (GlcNAc...) asparagine glycosylation is present at N432. S434 carries the post-translational modification Phosphoserine; by HT1. N-linked (GlcNAc...) asparagine glycosylation is found at N534, N566, and N575. 3 positions are modified to phosphoserine; by HT1: S613, S614, and S616. A glycan (N-linked (GlcNAc...) asparagine) is linked at N621. Residues 631–651 (VIIVSCAVALIILILVAILLF) form a helical membrane-spanning segment. Over 652-1053 (CICKSRRREE…KTIYEDLSSI (402 aa)) the chain is Cytoplasmic. Positions 662–671 (RSITGKETNR) are enriched in basic and acidic residues. The tract at residues 662–684 (RSITGKETNRRAQTIPSGSGGGM) is disordered. T669 and T675 each carry phosphothreonine; by HT1. Phosphoserine; by HT1 is present on residues S678, S680, S698, S699, and S700. Residue S704 is modified to Phosphoserine. T713 carries the phosphothreonine; by HT1 modification. Phosphoserine; by HT1 occurs at positions 716 and 718. A Phosphothreonine; by HT1 modification is found at T720. Phosphoserine; by HT1 occurs at positions 721, 724, and 760. T764 is modified (phosphothreonine; by HT1). S769 is subject to Phosphoserine; by HT1. The 284-residue stretch at 770 to 1053 (RAPAEVLGRS…KTIYEDLSSI (284 aa)) folds into the Protein kinase domain. Residues 776-784 (LGRSSHGTS) and K798 contribute to the ATP site. 2 positions are modified to phosphothreonine; by HT1: T928 and T1010. Phosphoserine; by HT1 is present on S1015. The residue at position 1045 (T1045) is a Phosphothreonine; by HT1. Position 1047 is a phosphotyrosine; by HT1 (Y1047). 2 positions are modified to phosphoserine; by HT1: S1051 and S1052.

Belongs to the protein kinase superfamily. Ser/Thr protein kinase family. In terms of assembly, interacts with SLAC1 (via N-terminus). Binds to ABI2, but not ABI1. Interacts with CPK3. In terms of processing, phosphorylated by HT1; this phosphorylation is inhibited by MPK12 and MPK4. In terms of tissue distribution, expressed in guard cells and in the vasculature of roots and leaves.

Its subcellular location is the cell membrane. It catalyses the reaction L-seryl-[protein] + ATP = O-phospho-L-seryl-[protein] + ADP + H(+). It carries out the reaction L-threonyl-[protein] + ATP = O-phospho-L-threonyl-[protein] + ADP + H(+). With respect to regulation, negatively regulated by ABI2. Its function is as follows. Receptor kinase acting as an early component in abscisic acid (ABA) signaling. Required for darkness, ABA, high CO(2) and hydrogen peroxide (H(2)O(2)) induction of S-type anion currents in guard cells leading to stomatal closure, possibly via the phosphorylation and activation of the anion channel SLAC1 and as a scaffolding component. Seems to act in parallel with SRK2E/OST1 in the ABA signaling pathway which regulates stomatal movement. Binds ATP. Involved in the local and/or systemic stomatal responses (e.g. stomatal closure) to light stress. In Arabidopsis thaliana (Mouse-ear cress), this protein is LRR receptor-like serine/threonine-protein kinase GHR1.